A 321-amino-acid polypeptide reads, in one-letter code: Lipoyl synthase (321 aa).

[4Fe-4S] cluster-binding residues include C68, C73, C79, C94, C98, C101, and S308. One can recognise a Radical SAM core domain in the interval 80–297 (FNHGTATFMI…KAEAIAMGFT (218 aa)).

Belongs to the radical SAM superfamily. Lipoyl synthase family. It depends on [4Fe-4S] cluster as a cofactor.

It localises to the cytoplasm. It catalyses the reaction [[Fe-S] cluster scaffold protein carrying a second [4Fe-4S](2+) cluster] + N(6)-octanoyl-L-lysyl-[protein] + 2 oxidized [2Fe-2S]-[ferredoxin] + 2 S-adenosyl-L-methionine + 4 H(+) = [[Fe-S] cluster scaffold protein] + N(6)-[(R)-dihydrolipoyl]-L-lysyl-[protein] + 4 Fe(3+) + 2 hydrogen sulfide + 2 5'-deoxyadenosine + 2 L-methionine + 2 reduced [2Fe-2S]-[ferredoxin]. It participates in protein modification; protein lipoylation via endogenous pathway; protein N(6)-(lipoyl)lysine from octanoyl-[acyl-carrier-protein]: step 2/2. Functionally, catalyzes the radical-mediated insertion of two sulfur atoms into the C-6 and C-8 positions of the octanoyl moiety bound to the lipoyl domains of lipoate-dependent enzymes, thereby converting the octanoylated domains into lipoylated derivatives. The polypeptide is Lipoyl synthase (Pectobacterium carotovorum subsp. carotovorum (strain PC1)).